A 245-amino-acid polypeptide reads, in one-letter code: Probable phosphatase YcdX (245 aa).

Residues histidine 7, histidine 9, histidine 15, histidine 40, glutamate 73, histidine 101, histidine 131, aspartate 192, and histidine 194 each coordinate Zn(2+).

It belongs to the PHP family. In terms of assembly, homotrimer. Zn(2+) is required as a cofactor.

The chain is Probable phosphatase YcdX from Escherichia coli (strain K12 / MC4100 / BW2952).